The primary structure comprises 92 residues: Putative phosphotransferase enzyme IIB component SgcB (92 aa).

The 92-residue stretch at 1 to 92 (MKKILVACGT…KQQIKALLTQ (92 aa)) folds into the PTS EIIB type-2 domain. Catalysis depends on Cys8, which acts as the Phosphocysteine intermediate.

It localises to the cytoplasm. Its function is as follows. The phosphoenolpyruvate-dependent sugar phosphotransferase system (sugar PTS), a major carbohydrate active -transport system, catalyzes the phosphorylation of incoming sugar substrates concomitantly with their translocation across the cell membrane. The chain is Putative phosphotransferase enzyme IIB component SgcB (sgcB) from Escherichia coli (strain K12).